Reading from the N-terminus, the 760-residue chain is 5-methyltetrahydropteroyltriglutamate--homocysteine methyltransferase (760 aa).

Residues 15–18 (RELK) and Lys-114 each bind 5-methyltetrahydropteroyltri-L-glutamate. Residues 436-438 (IGS) and Glu-489 each bind L-homocysteine. L-methionine is bound by residues 436 to 438 (IGS) and Glu-489. 5-methyltetrahydropteroyltri-L-glutamate is bound by residues 520–521 (RC) and Trp-566. Asp-604 is a binding site for L-homocysteine. Position 604 (Asp-604) interacts with L-methionine. Glu-610 is a binding site for 5-methyltetrahydropteroyltri-L-glutamate. Zn(2+) contacts are provided by His-646, Cys-648, and Glu-670. His-699 serves as the catalytic Proton donor. Residue Cys-731 coordinates Zn(2+).

This sequence belongs to the vitamin-B12 independent methionine synthase family. The cofactor is Zn(2+).

It carries out the reaction 5-methyltetrahydropteroyltri-L-glutamate + L-homocysteine = tetrahydropteroyltri-L-glutamate + L-methionine. The protein operates within amino-acid biosynthesis; L-methionine biosynthesis via de novo pathway; L-methionine from L-homocysteine (MetE route): step 1/1. In terms of biological role, catalyzes the transfer of a methyl group from 5-methyltetrahydrofolate to homocysteine resulting in methionine formation. This Shewanella oneidensis (strain ATCC 700550 / JCM 31522 / CIP 106686 / LMG 19005 / NCIMB 14063 / MR-1) protein is 5-methyltetrahydropteroyltriglutamate--homocysteine methyltransferase.